A 440-amino-acid polypeptide reads, in one-letter code: Proton extrusion protein PxcA (440 aa).

The next 4 helical transmembrane spans lie at 222 to 242, 316 to 336, 352 to 374, and 400 to 420; these read FVLTLIIVPLLAHQLTKTFFL, NAIANIFADIFSLVAFSLVLV, IVYGLSDSAKAFLIILFTDMFVG, and FNFLFIATFPVILDTVFKYWI.

This sequence belongs to the CemA family.

It localises to the cell inner membrane. In terms of biological role, required for H(+) efflux immediately after light irradiation to form a rapid H(+) concentration gradient across the thylakoid membranes. Together with PxcL, contributes to transient H(+) uptake following dark to light transition. Involved in light-induced Na(+)-dependent proton extrusion. Also seems to be involved in CO(2) transport. This is Proton extrusion protein PxcA from Synechocystis sp. (strain ATCC 27184 / PCC 6803 / Kazusa).